The primary structure comprises 782 residues: Polyribonucleotide nucleotidyltransferase (782 aa).

Mg(2+) is bound by residues aspartate 514 and aspartate 520. Positions proline 580 to isoleucine 639 constitute a KH domain. Positions glycine 651 to valine 723 constitute an S1 motif domain. The span at alanine 734–glutamine 753 shows a compositional bias: low complexity. The interval alanine 734–histidine 782 is disordered. Residues arginine 766 to glutamine 776 show a composition bias toward basic and acidic residues.

This sequence belongs to the polyribonucleotide nucleotidyltransferase family. Requires Mg(2+) as cofactor.

Its subcellular location is the cytoplasm. The enzyme catalyses RNA(n+1) + phosphate = RNA(n) + a ribonucleoside 5'-diphosphate. Involved in mRNA degradation. Catalyzes the phosphorolysis of single-stranded polyribonucleotides processively in the 3'- to 5'-direction. This chain is Polyribonucleotide nucleotidyltransferase, found in Acidothermus cellulolyticus (strain ATCC 43068 / DSM 8971 / 11B).